The primary structure comprises 553 residues: uncharacterized protein (553 aa).

An SWIB/MDM2 domain is found at 26–109 (RFEFVGWGSR…YDLLEKHYKE (84 aa)). The 126-residue stretch at 150-275 (AIVSDNIKLL…KAKKLHKDQT (126 aa)) folds into the Plus3 domain. Disordered stretches follow at residues 335–357 (QNPE…SESP) and 447–482 (PVNN…ETLD). The segment covering 343 to 353 (EAHKSDNEQRL) has biased composition (basic and acidic residues). The span at 447 to 461 (PVNNVDNGSQVQPNP) shows a compositional bias: polar residues. Acidic residues predominate over residues 466–480 (ELSDDDEDDNGDGET). The GYF domain occupies 497-551 (KLNWLYKDPQGLVQGPFSLTQLKAWSDAEYFTKQFRVWMTGESMESAVLLTDVLR).

This is an uncharacterized protein from Arabidopsis thaliana (Mouse-ear cress).